The following is a 650-amino-acid chain: Chaperone protein HtpG (650 aa).

Positions 1 to 349 (MTKTTKKFET…SSDLPLNVSR (349 aa)) are a; substrate-binding. The interval 350–566 (EILQEDVQIK…EHGLNANMER (217 aa)) is b. Residues 567–650 (ILRAMNQDVP…VADGKAAAGE (84 aa)) form a c region.

The protein belongs to the heat shock protein 90 family. As to quaternary structure, homodimer.

Its subcellular location is the cytoplasm. In terms of biological role, molecular chaperone. Has ATPase activity. The chain is Chaperone protein HtpG from Geobacter metallireducens (strain ATCC 53774 / DSM 7210 / GS-15).